The following is a 93-amino-acid chain: Small ribosomal subunit protein uS19 (93 aa).

It belongs to the universal ribosomal protein uS19 family.

Functionally, protein S19 forms a complex with S13 that binds strongly to the 16S ribosomal RNA. The sequence is that of Small ribosomal subunit protein uS19 from Lacticaseibacillus paracasei (strain ATCC 334 / BCRC 17002 / CCUG 31169 / CIP 107868 / KCTC 3260 / NRRL B-441) (Lactobacillus paracasei).